We begin with the raw amino-acid sequence, 208 residues long: MRKIRTKICGITTPEDAAAAAAAGADAVGLVFFQGSSRAVDIARAKKITAALPPFVSVVALFVNESAQNIRRILAEVPIHIIQFHGDEDDAFCRQFHRPYIKAIRVQTASDIRNAATRFPDAQALLFDAYHPSEYGGTGNRFDWTLLAEYSGKPWVLAGGLTPENVGEAVRITGAESVDVSGGVEASKGKKDAAKVAAFIATANRLSR.

This sequence belongs to the TrpF family.

It carries out the reaction N-(5-phospho-beta-D-ribosyl)anthranilate = 1-(2-carboxyphenylamino)-1-deoxy-D-ribulose 5-phosphate. Its pathway is amino-acid biosynthesis; L-tryptophan biosynthesis; L-tryptophan from chorismate: step 3/5. This is N-(5'-phosphoribosyl)anthranilate isomerase from Neisseria meningitidis serogroup B (strain ATCC BAA-335 / MC58).